A 202-amino-acid polypeptide reads, in one-letter code: Thymidylate kinase (202 aa).

7-14 contacts ATP; the sequence is GTEGVGKT.

This sequence belongs to the thymidylate kinase family.

It carries out the reaction dTMP + ATP = dTDP + ADP. In terms of biological role, phosphorylation of dTMP to form dTDP in both de novo and salvage pathways of dTTP synthesis. The polypeptide is Thymidylate kinase (Acinetobacter baylyi (strain ATCC 33305 / BD413 / ADP1)).